The sequence spans 444 residues: MGKGGNQGEGAAEREVSVPTFSWEEIQKHNLRTDRWLVIDRKVYNITKWSIQHPGGQRVIGHYAGEDATDAFRAFHPDLEFVGKFLKPLLIGELAPEEPSQDHGKNSKITEDFRALRKTAEDMNLFKTNHVFFLLLLAHIIALESIAWFTVFYFGNGWISTLITAFVLATSQAQAGWLQHDYGHLSVYRKPKWNHLVHKFVIGHLKGASANWWNHRHFQHHAKPNIFHKDPDVNMLHVFVLGEWQPIEYGKKKLKYLPYNHQHEYFFLIGPPLLIPMYFQYQIIMTMIVHKNWVDLAWAISYYIRFFITYIPFYGILGALLFLNFIRFLESHWFVWVTQMNHIVMEIDQEAYRDWFSSQLTATCNVEQSFFNDWFSGHLNFQIEHHLFPTMPRHNLHKIAPLVKSLCAKHGIEYQEKPLLRALLDIIRSLKKSGKLWLDAYLHK.

Residues 1 to 131 (MGKGGNQGEG…DMNLFKTNHV (131 aa)) lie on the Cytoplasmic side of the membrane. Positions 18–95 (VPTFSWEEIQ…LKPLLIGELA (78 aa)) constitute a Cytochrome b5 heme-binding domain. A helical membrane pass occupies residues 132 to 152 (FFLLLLAHIIALESIAWFTVF). At 153 to 157 (YFGNG) the chain is on the lumenal side. A helical membrane pass occupies residues 158-178 (WISTLITAFVLATSQAQAGWL). At 179–264 (QHDYGHLSVY…KYLPYNHQHE (86 aa)) the chain is on the cytoplasmic side. The Histidine box-1 signature appears at 180 to 184 (HDYGH). The Histidine box-2 motif lies at 217 to 221 (HFQHH). A helical membrane pass occupies residues 265–285 (YFFLIGPPLLIPMYFQYQIIM). The Lumenal portion of the chain corresponds to 286-305 (TMIVHKNWVDLAWAISYYIR). The helical transmembrane segment at 306–326 (FFITYIPFYGILGALLFLNFI) threads the bilayer. Over 327-444 (RFLESHWFVW…KLWLDAYLHK (118 aa)) the chain is Cytoplasmic. A Histidine box-3 motif is present at residues 382-386 (QIEHH).

Belongs to the fatty acid desaturase type 1 family.

The protein resides in the endoplasmic reticulum membrane. The enzyme catalyses (9Z,12Z)-octadecadienoyl-CoA + 2 Fe(II)-[cytochrome b5] + O2 + 2 H(+) = (6Z,9Z,12Z)-octadecatrienoyl-CoA + 2 Fe(III)-[cytochrome b5] + 2 H2O. It carries out the reaction (9Z,12Z,15Z)-octadecatrienoyl-CoA + 2 Fe(II)-[cytochrome b5] + O2 + 2 H(+) = (6Z,9Z,12Z,15Z)-octadecatetraenoyl-CoA + 2 Fe(III)-[cytochrome b5] + 2 H2O. It catalyses the reaction (9Z,12Z,15Z,18Z,21Z)-tetracosapentaenoyl-CoA + 2 Fe(II)-[cytochrome b5] + O2 + 2 H(+) = (6Z,9Z,12Z,15Z,18Z,21Z)-tetracosahexaenoyl-CoA + 2 Fe(III)-[cytochrome b5] + 2 H2O. The catalysed reaction is (11E)-octadecenoyl-CoA + 2 Fe(II)-[cytochrome b5] + O2 + 2 H(+) = (6Z,11E)-octadecadienoyl-CoA + 2 Fe(III)-[cytochrome b5] + 2 H2O. The enzyme catalyses (11Z,14Z)-eicosadienoyl-CoA + 2 Fe(II)-[cytochrome b5] + O2 + 2 H(+) = (8Z,11Z,14Z)-eicosatrienoyl-CoA + 2 Fe(III)-[cytochrome b5] + 2 H2O. It carries out the reaction (11Z,14Z,17Z)-eicosatrienoyl-CoA + 2 Fe(II)-[cytochrome b5] + O2 + 2 H(+) = (8Z,11Z,14Z,17Z)-eicosatetraenoyl-CoA + 2 Fe(III)-[cytochrome b5] + 2 H2O. Its pathway is lipid metabolism; polyunsaturated fatty acid biosynthesis. Functionally, involved in the biosynthesis of highly unsaturated fatty acids (HUFA) from the essential polyunsaturated fatty acids (PUFA) linoleic acid (LA) (18:2n-6) and alpha-linolenic acid (ALA) (18:3n-3) precursors, acting as a fatty acyl-coenzyme A (CoA) desaturase that introduces a cis double bond at carbon 6 of the fatty acyl chain. Catalyzes the first and rate limiting step in this pathway which is the desaturation of LA (18:2n-6) and ALA (18:3n-3) into gamma-linoleate (GLA) (18:3n-6) and stearidonate (18:4n-3), respectively. Subsequently, in the biosynthetic pathway of HUFA n-3 series, it desaturates tetracosapentaenoate (24:5n-3) to tetracosahexaenoate (24:6n-3), which is then converted to docosahexaenoate (DHA)(22:6n-3), an important lipid for nervous system function. It can also desaturate (11E)-octadecenoate (trans-vaccenoate) at carbon 6 generating (6Z,11E)-octadecadienoate. In addition to Delta-6 activity, this enzyme exhibits Delta-8 activity with slight biases toward n-3 fatty acyl-CoA substrates. This Pongo abelii (Sumatran orangutan) protein is Acyl-CoA 6-desaturase (FADS2).